We begin with the raw amino-acid sequence, 198 residues long: uncharacterized protein (198 aa).

A coiled-coil region spans residues 20 to 58 (ERVRRDEELARLSADKEQAKNDLEESKRRIARLRGTVYE). The tract at residues 144-198 (LSNRKTKNPESDRRRQSRKKKSTQIQASDEMKHRRHHVHKVHHYSQKQSSSTTRR) is disordered. The segment covering 176–188 (HRRHHVHKVHHYS) has biased composition (basic residues). Polar residues predominate over residues 189-198 (QKQSSSTTRR).

The protein localises to the nucleus. It localises to the nucleolus. This is an uncharacterized protein from Schizosaccharomyces pombe (strain 972 / ATCC 24843) (Fission yeast).